The sequence spans 615 residues: Dihydroxy-acid dehydratase (615 aa).

Residue Asp-81 participates in Mg(2+) binding. Cys-122 provides a ligand contact to [2Fe-2S] cluster. Mg(2+) contacts are provided by Asp-123 and Lys-124. Residue Lys-124 is modified to N6-carboxylysine. Cys-193 is a [2Fe-2S] cluster binding site. Glu-489 serves as a coordination point for Mg(2+). The active-site Proton acceptor is Ser-515.

The protein belongs to the IlvD/Edd family. In terms of assembly, homodimer. [2Fe-2S] cluster is required as a cofactor. It depends on Mg(2+) as a cofactor.

The enzyme catalyses (2R)-2,3-dihydroxy-3-methylbutanoate = 3-methyl-2-oxobutanoate + H2O. It carries out the reaction (2R,3R)-2,3-dihydroxy-3-methylpentanoate = (S)-3-methyl-2-oxopentanoate + H2O. It functions in the pathway amino-acid biosynthesis; L-isoleucine biosynthesis; L-isoleucine from 2-oxobutanoate: step 3/4. The protein operates within amino-acid biosynthesis; L-valine biosynthesis; L-valine from pyruvate: step 3/4. In terms of biological role, functions in the biosynthesis of branched-chain amino acids. Catalyzes the dehydration of (2R,3R)-2,3-dihydroxy-3-methylpentanoate (2,3-dihydroxy-3-methylvalerate) into 2-oxo-3-methylpentanoate (2-oxo-3-methylvalerate) and of (2R)-2,3-dihydroxy-3-methylbutanoate (2,3-dihydroxyisovalerate) into 2-oxo-3-methylbutanoate (2-oxoisovalerate), the penultimate precursor to L-isoleucine and L-valine, respectively. The chain is Dihydroxy-acid dehydratase from Pseudomonas savastanoi pv. phaseolicola (strain 1448A / Race 6) (Pseudomonas syringae pv. phaseolicola (strain 1448A / Race 6)).